The primary structure comprises 311 residues: Aspartate carbamoyltransferase catalytic subunit (311 aa).

Residues R55 and T56 each contribute to the carbamoyl phosphate site. Residue K83 coordinates L-aspartate. The carbamoyl phosphate site is built by R105, H134, and Q137. Residues R167 and R226 each contribute to the L-aspartate site. Carbamoyl phosphate contacts are provided by G267 and P268.

This sequence belongs to the aspartate/ornithine carbamoyltransferase superfamily. ATCase family. As to quaternary structure, heterododecamer (2C3:3R2) of six catalytic PyrB chains organized as two trimers (C3), and six regulatory PyrI chains organized as three dimers (R2).

The enzyme catalyses carbamoyl phosphate + L-aspartate = N-carbamoyl-L-aspartate + phosphate + H(+). It participates in pyrimidine metabolism; UMP biosynthesis via de novo pathway; (S)-dihydroorotate from bicarbonate: step 2/3. Its function is as follows. Catalyzes the condensation of carbamoyl phosphate and aspartate to form carbamoyl aspartate and inorganic phosphate, the committed step in the de novo pyrimidine nucleotide biosynthesis pathway. In Corynebacterium jeikeium (strain K411), this protein is Aspartate carbamoyltransferase catalytic subunit.